Here is a 513-residue protein sequence, read N- to C-terminus: GMP synthase [glutamine-hydrolyzing] (513 aa).

Residues 9 to 198 (LILVLDFGSQ…VRRVCDCRGQ (190 aa)) enclose the Glutamine amidotransferase type-1 domain. The active-site Nucleophile is cysteine 86. Residues histidine 172 and glutamate 174 contribute to the active site. A GMPS ATP-PPase domain is found at 199-388 (WTMENFIEIE…LGIPEHLVWR (190 aa)). Residue 226–232 (SGGVDSS) coordinates ATP.

In terms of assembly, homodimer.

The enzyme catalyses XMP + L-glutamine + ATP + H2O = GMP + L-glutamate + AMP + diphosphate + 2 H(+). Its pathway is purine metabolism; GMP biosynthesis; GMP from XMP (L-Gln route): step 1/1. Catalyzes the synthesis of GMP from XMP. The polypeptide is GMP synthase [glutamine-hydrolyzing] (Staphylococcus aureus (strain USA300)).